The sequence spans 272 residues: Low-density lipoprotein receptor class A domain-containing protein 2 (272 aa).

The first 25 residues, 1–25, serve as a signal peptide directing secretion; sequence MEACCLLQLPQRLLLLGAAALTATA. Residues 26 to 233 lie on the Extracellular side of the membrane; sequence LETADLAELC…GSTDAHTSRS (208 aa). Asparagine 97 carries N-linked (GlcNAc...) asparagine glycosylation. Residues 172 to 214 form the LDL-receptor class A domain; that stretch reads PCGAYFRCQNGRCIPSSLVCDPWGMDNCGDGSDQGSWSPADCR. Intrachain disulfides connect cysteine 173–cysteine 184, cysteine 179–cysteine 199, and cysteine 191–cysteine 213. The disordered stretch occupies residues 202 to 272; sequence GSDQGSWSPA…QDAALEGSTE (71 aa). Polar residues predominate over residues 220 to 236; the sequence is PSQTGSTDAHTSRSLTP. The helical transmembrane segment at 234–250 threads the bilayer; the sequence is LTPSPALGSAGSLWIAA. Residues 251-272 lie on the Cytoplasmic side of the membrane; the sequence is ERSSPAGRDPTRQDAALEGSTE.

Belongs to the LDLR family.

Its subcellular location is the membrane. This chain is Low-density lipoprotein receptor class A domain-containing protein 2 (LDLRAD2), found in Homo sapiens (Human).